A 1222-amino-acid chain; its full sequence is ATP-dependent helicase/nuclease subunit A (1222 aa).

The 457-residue stretch at 39–495 (QKRTAQQIEA…ILLKENFRSQ (457 aa)) folds into the UvrD-like helicase ATP-binding domain. Position 60-67 (60-67 (ASAGSGKT)) interacts with ATP. The region spanning 524-810 (QLIAGSHAQT…NLMTIHKSKG (287 aa)) is the UvrD-like helicase C-terminal domain.

Belongs to the helicase family. AddA subfamily. In terms of assembly, heterodimer of AddA and AddB/RexB. Mg(2+) serves as cofactor.

It carries out the reaction Couples ATP hydrolysis with the unwinding of duplex DNA by translocating in the 3'-5' direction.. It catalyses the reaction ATP + H2O = ADP + phosphate + H(+). Its function is as follows. The heterodimer acts as both an ATP-dependent DNA helicase and an ATP-dependent, dual-direction single-stranded exonuclease. Recognizes the chi site generating a DNA molecule suitable for the initiation of homologous recombination. The AddA nuclease domain is required for chi fragment generation; this subunit has the helicase and 3' -&gt; 5' nuclease activities. This is ATP-dependent helicase/nuclease subunit A from Streptococcus pyogenes serotype M12 (strain MGAS9429).